The primary structure comprises 154 residues: Transcriptional repressor NrdR (154 aa).

A zinc finger lies at 3-34; that stretch reads CPFCSHNDSKVIDSRPTDEGQAIRRRRECISC. Positions 49-139 constitute an ATP-cone domain; it reads LIVVKKNGNR…VYREFKDINT (91 aa).

The protein belongs to the NrdR family. Requires Zn(2+) as cofactor.

Functionally, negatively regulates transcription of bacterial ribonucleotide reductase nrd genes and operons by binding to NrdR-boxes. The polypeptide is Transcriptional repressor NrdR (Alkaliphilus oremlandii (strain OhILAs) (Clostridium oremlandii (strain OhILAs))).